The chain runs to 337 residues: D-alanine--D-alanine ligase (337 aa).

An ATP-grasp domain is found at Lys-124 to Asn-330. Ala-154–Glu-209 is an ATP binding site. Mg(2+) is bound by residues Asp-284, Glu-297, and Asn-299.

This sequence belongs to the D-alanine--D-alanine ligase family. Mg(2+) is required as a cofactor. Requires Mn(2+) as cofactor.

It localises to the cytoplasm. It carries out the reaction 2 D-alanine + ATP = D-alanyl-D-alanine + ADP + phosphate + H(+). The protein operates within cell wall biogenesis; peptidoglycan biosynthesis. In terms of biological role, cell wall formation. In Shewanella baltica (strain OS223), this protein is D-alanine--D-alanine ligase.